The chain runs to 294 residues: Phosphoribosylaminoimidazole-succinocarboxamide synthase (294 aa).

The protein belongs to the SAICAR synthetase family.

The catalysed reaction is 5-amino-1-(5-phospho-D-ribosyl)imidazole-4-carboxylate + L-aspartate + ATP = (2S)-2-[5-amino-1-(5-phospho-beta-D-ribosyl)imidazole-4-carboxamido]succinate + ADP + phosphate + 2 H(+). The protein operates within purine metabolism; IMP biosynthesis via de novo pathway; 5-amino-1-(5-phospho-D-ribosyl)imidazole-4-carboxamide from 5-amino-1-(5-phospho-D-ribosyl)imidazole-4-carboxylate: step 1/2. The chain is Phosphoribosylaminoimidazole-succinocarboxamide synthase from Rhodococcus opacus (strain B4).